Here is a 177-residue protein sequence, read N- to C-terminus: ATP-dependent protease subunit HslV (177 aa).

T7 is a catalytic residue. Residues A162, C165, and T168 each coordinate Na(+).

Belongs to the peptidase T1B family. HslV subfamily. As to quaternary structure, a double ring-shaped homohexamer of HslV is capped on each side by a ring-shaped HslU homohexamer. The assembly of the HslU/HslV complex is dependent on binding of ATP.

Its subcellular location is the cytoplasm. The enzyme catalyses ATP-dependent cleavage of peptide bonds with broad specificity.. Allosterically activated by HslU binding. In terms of biological role, protease subunit of a proteasome-like degradation complex believed to be a general protein degrading machinery. This Leptospira biflexa serovar Patoc (strain Patoc 1 / Ames) protein is ATP-dependent protease subunit HslV.